We begin with the raw amino-acid sequence, 120 residues long: Ribonuclease P protein component (120 aa).

It belongs to the RnpA family. In terms of assembly, consists of a catalytic RNA component (M1 or rnpB) and a protein subunit.

It catalyses the reaction Endonucleolytic cleavage of RNA, removing 5'-extranucleotides from tRNA precursor.. Functionally, RNaseP catalyzes the removal of the 5'-leader sequence from pre-tRNA to produce the mature 5'-terminus. It can also cleave other RNA substrates such as 4.5S RNA. The protein component plays an auxiliary but essential role in vivo by binding to the 5'-leader sequence and broadening the substrate specificity of the ribozyme. This chain is Ribonuclease P protein component, found in Latilactobacillus sakei subsp. sakei (strain 23K) (Lactobacillus sakei subsp. sakei).